The chain runs to 272 residues: MFRNQYDGDATTWSPQGRLHQVEYALEAIKQGSATVGLVSKTHAVLVALKRNAEELSSYQKKLIRIDDHIGIAIAGLAPDARVLSNYMKQEALSSKTLFTRPIPVRRLMSKVAEKAQINTQEYGRRPYGVGFLVIGYDESGPHLLEFQPSGLVLEYLGTSMGSRSQSARTYIERNLDTFPDSSREELILSALRALRDTLSKDQELTEENVSISVIGKDEKYTLYDQNDTKEWLDKLGDKGPAAARASRAAAEEPQAPTAEAILDSADAMETD.

Residues 243 to 261 show a composition bias toward low complexity; the sequence is AARASRAAAEEPQAPTAEA. The segment at 243–272 is disordered; the sequence is AARASRAAAEEPQAPTAEAILDSADAMETD.

This sequence belongs to the peptidase T1A family. The 26S proteasome consists of a 20S proteasome core and two 19S regulatory subunits. The 20S proteasome core is composed of 28 subunits that are arranged in four stacked rings, resulting in a barrel-shaped structure. The two end rings are each formed by seven alpha subunits, and the two central rings are each formed by seven beta subunits. The catalytic chamber with the active sites is on the inside of the barrel.

It localises to the cytoplasm. It is found in the nucleus. In terms of biological role, the proteasome is a multicatalytic proteinase complex which is characterized by its ability to cleave peptides with Arg, Phe, Tyr, Leu, and Glu adjacent to the leaving group at neutral or slightly basic pH. The proteasome has an ATP-dependent proteolytic activity. The protein is Probable proteasome subunit alpha type-6 of Schizosaccharomyces pombe (strain 972 / ATCC 24843) (Fission yeast).